The primary structure comprises 129 residues: Flagellar assembly factor FliW 2 (129 aa).

It belongs to the FliW family. In terms of assembly, interacts with translational regulator CsrA and flagellin(s).

The protein localises to the cytoplasm. In terms of biological role, acts as an anti-CsrA protein, binds CsrA and prevents it from repressing translation of its target genes, one of which is flagellin. Binds to flagellin and participates in the assembly of the flagellum. In Helicobacter pylori (strain HPAG1), this protein is Flagellar assembly factor FliW 2.